Reading from the N-terminus, the 1303-residue chain is Latent-transforming growth factor beta-binding protein 3 (1303 aa).

The signal sequence occupies residues 1–43; sequence MPGPRGAAGGLAPEMRGAGAAGLLALLLLLLLLLLGLGGRVEG. Asn-89 is a glycosylation site (N-linked (GlcNAc...) asparagine). Residues 109–141 form the EGF-like 1 domain; sequence RVVVCPLPCMNGGQCSSRNQCLCPPDFTGRFCQ. 6 disulfide bridges follow: Cys-113/Cys-123, Cys-117/Cys-129, Cys-131/Cys-140, Cys-279/Cys-303, Cys-289/Cys-316, and Cys-304/Cys-319. Residues 247–282 form a disordered region; sequence SSNAESAAPSQHLLPHPKPSHPRPPTQKPLGRCFQD. The TB 1 domain occupies 277 to 331; sequence GRCFQDTLPKQPCGSNPLPGLTKQEDCCGSIGTAWGQSKCHKCPQLQYTGVQKPG. An N-linked (GlcNAc...) asparagine glycan is attached at Asn-349. The EGF-like 2; calcium-binding domain occupies 355–395; the sequence is DINECAMPGVCRHGDCLNNPGSYRCVCPPGHSLGPSRTQCI. 7 disulfide bridges follow: Cys-359-Cys-370, Cys-365-Cys-379, Cys-381-Cys-394, Cys-405-Cys-428, Cys-415-Cys-440, Cys-429-Cys-443, and Cys-430-Cys-455. The TB 2 domain maps to 403-455; it reads SLCFRLVSPEHQCQHPLTTRLTRQLCCCSVGKAWGARCQRCPTDGTAAFKEIC. Positions 478–552 are disordered; that stretch reads FSLFLHPDGP…ISRPSPPTMR (75 aa). Residues 529–540 are compositionally biased toward low complexity; it reads PTATTTPARPYP. Positions 574–615 constitute an EGF-like 3 domain; the sequence is ETDECRLNQNICGHGECVPGPPDYSCHCNPGYRSHPQHRYCV. 37 cysteine pairs are disulfide-bonded: Cys-578/Cys-590, Cys-585/Cys-599, Cys-601/Cys-614, Cys-620/Cys-632, Cys-625/Cys-641, Cys-664/Cys-676, Cys-670/Cys-685, Cys-687/Cys-701, Cys-748/Cys-759, Cys-754/Cys-768, Cys-770/Cys-783, Cys-789/Cys-800, Cys-795/Cys-809, Cys-811/Cys-824, Cys-830/Cys-841, Cys-836/Cys-850, Cys-852/Cys-864, Cys-870/Cys-883, Cys-877/Cys-892, Cys-894/Cys-907, Cys-919/Cys-942, Cys-929/Cys-954, Cys-943/Cys-959, Cys-944/Cys-971, Cys-997/Cys-1010, Cys-1005/Cys-1019, Cys-1021/Cys-1034, Cys-1040/Cys-1051, Cys-1046/Cys-1060, Cys-1062/Cys-1075, Cys-1086/Cys-1097, Cys-1092/Cys-1106, Cys-1108/Cys-1121, Cys-1138/Cys-1162, Cys-1148/Cys-1174, Cys-1163/Cys-1177, and Cys-1164/Cys-1186. Positions 616–659 constitute an EGF-like 4; calcium-binding domain; the sequence is DVNECEAEPCGPGRGICMNTGGSYNCHCNRGYRLHVGAGGRSCV. In terms of domain architecture, EGF-like 5; calcium-binding spans 660–702; that stretch reads DLNECAKPHLCGDGGFCINFPGHYKCNCYPGYRLKASRPPVCE. In terms of domain architecture, EGF-like 6; calcium-binding spans 744-784; sequence DVNECAEGSPCSPGWCENLPGSFRCTCAQGYAPAPDGRSCL. The region spanning 785–825 is the EGF-like 7; calcium-binding domain; the sequence is DVDECEAGDVCDNGICSNTPGSFQCQCLSGYHLSRDRSHCE. Positions 826–865 constitute an EGF-like 8; calcium-binding domain; it reads DIDECDFPAACIGGDCINTNGSYRCLCPQGHRLVGGRKCQ. A glycan (N-linked (GlcNAc...) asparagine) is linked at Asn-845. The EGF-like 9; calcium-binding domain occupies 866 to 908; that stretch reads DIDECSQDPSLCLPHGACKNLQGSYVCVCDEGFTPTQDQHGCE. One can recognise a TB 3 domain in the interval 917-971; sequence KECYLNFDDTVFCDSVLATNVTQQECCCSLGAGWGDHCEIYPCPVYSSAEFHSLC. An N-linked (GlcNAc...) asparagine glycan is attached at Asn-936. Residues 993 to 1035 enclose the EGF-like 10; calcium-binding domain; that stretch reads DIDECMLFGSEICKEGKCVNTQPGYECYCKQGFYYDGNLLECV. Positions 1036–1076 constitute an EGF-like 11; calcium-binding domain; the sequence is DVDECLDESNCRNGVCENTRGGYRCACTPPAEYSPAQRQCL. One can recognise an EGF-like 12; calcium-binding domain in the interval 1082-1122; sequence DVDECQDPAACRPGRCVNLPGSYRCECRPPWVPGPSGRDCQ. The TB 4 domain maps to 1136–1186; it reads DVCWSQRGEDGMCAGPLAGPALTFDDCCCRQGRGWGAQCRPCPPRGAGSHC. Positions 1188–1198 are enriched in polar residues; sequence TSQSESNSFWD. A disordered region spans residues 1188–1219; it reads TSQSESNSFWDTSPLLLGKPPRDEDSSEEDSD. The region spanning 1254–1298 is the EGF-like 13; calcium-binding domain; sequence DIDECRELNQRGLLCKSERCVNTSGSFRCVCKAGFARSRPHGACV. 2 disulfide bridges follow: Cys-1258/Cys-1273 and Cys-1268/Cys-1282. An N-linked (GlcNAc...) asparagine glycan is attached at Asn-1275.

Belongs to the LTBP family. In terms of assembly, forms part of the large latent transforming growth factor beta precursor complex; removal is essential for activation of complex. Interacts with EFEMP2. In terms of processing, contains hydroxylated asparagine residues. Post-translationally, two intrachain disulfide bonds from the TB3 domain are rearranged upon TGFB1 binding, and form interchain bonds with TGFB1 propeptide, anchoring it to the extracellular matrix. Isoform 2: Expressed prominently in heart, skeletal muscle, prostate, testis, small intestine and ovary. Isoform 1: Strongly expressed in pancreas and liver.

It localises to the secreted. It is found in the extracellular space. The protein resides in the extracellular matrix. Its function is as follows. Key regulator of transforming growth factor beta (TGFB1, TGFB2 and TGFB3) that controls TGF-beta activation by maintaining it in a latent state during storage in extracellular space. Associates specifically via disulfide bonds with the Latency-associated peptide (LAP), which is the regulatory chain of TGF-beta, and regulates integrin-dependent activation of TGF-beta. This is Latent-transforming growth factor beta-binding protein 3 (LTBP3) from Homo sapiens (Human).